The sequence spans 404 residues: Pleckstrin homology domain-containing family A member 1 (404 aa).

2 consecutive PH domains span residues 7–112 (QNRI…KAIK) and 191–289 (AVIK…GAIV). Disordered regions lie at residues 291–332 (QRGP…RSNS) and 355–404 (NFKV…VSDV). Residues 316–332 (TNAATATSHSTASRSNS) show a composition bias toward low complexity. S332 and S362 each carry phosphoserine.

In terms of assembly, interacts with MPDZ and PTPN13. In terms of tissue distribution, highly expressed in skeletal muscle, thymus, pancreas, placenta and lung. Detected at low levels in brain, heart, peripheral blood leukocytes, testis, ovary, spinal cord, thyroid, kidney, liver, small intestine and colon.

It localises to the cytoplasm. The protein resides in the cell membrane. Its subcellular location is the nucleus. Binds specifically to phosphatidylinositol 3,4-diphosphate (PtdIns3,4P2), but not to other phosphoinositides. May recruit other proteins to the plasma membrane. The chain is Pleckstrin homology domain-containing family A member 1 (PLEKHA1) from Homo sapiens (Human).